A 58-amino-acid chain; its full sequence is Apelin receptor early endogenous ligand (58 aa).

Positions 1-22 (MRFFHPLYLLLLLLTVLVLISA) are cleaved as a signal peptide.

This sequence belongs to the Elabela/Toddler family. In terms of assembly, interacts with aplnra and aplnrb. Expressed ubiquitously during late blastula and gastrula stages and becomes restricted to the lateral mesoderm, endoderm, and anterior and posterior notochord after gastrulation.

It localises to the secreted. The protein resides in the extracellular space. Functionally, peptide hormone that functions as endogenous ligand for the G-protein-coupled apelin receptor (aplnra and/or aplnrb), that plays a role in the regulation of normal cardiovascular function and fluid homeostasis. Functions as a balanced agonist activating both G(i) protein pathway and beta-arrestin pathway of APLNR. Downstream G proteins activation, apelin can inhibit cAMP production and activate key intracellular effectors such as ERKs. On the other hand, APLNR activation induces beta-arrestin recruitment to the membrane leading to desensitization and internalization of the receptor. Required for mesendodermal differentiation, blood vessels formation and heart morphogenesis during early development and for adult cardiovascular homeostasis. Acts as a motogen by promoting mesendodermal cell migration during gastrulation by binding and activating the apelin receptor. Acts as an early embryonic regulator of cellular movement with a role in migration and development of cardiac progenitor cells. May act as a chemoattractant for the activation of angioblast migration toward the embryonic midline, i.e. the position of the future vessel formation, during vasculogenesis. Positively regulates sinus venosus (SV)-derived endothelial cells migration into the developing heart to promote coronary blood vessel sprouting. Involved in cardioprotective functions during heart failure. Mediates myocardial contractility in an ERK1/2-dependent manner. This chain is Apelin receptor early endogenous ligand, found in Danio rerio (Zebrafish).